The following is a 126-amino-acid chain: Holo-[acyl-carrier-protein] synthase (126 aa).

Mg(2+) contacts are provided by D9 and E58.

The protein belongs to the P-Pant transferase superfamily. AcpS family. Mg(2+) is required as a cofactor.

Its subcellular location is the cytoplasm. It carries out the reaction apo-[ACP] + CoA = holo-[ACP] + adenosine 3',5'-bisphosphate + H(+). In terms of biological role, transfers the 4'-phosphopantetheine moiety from coenzyme A to a Ser of acyl-carrier-protein. The sequence is that of Holo-[acyl-carrier-protein] synthase from Photorhabdus laumondii subsp. laumondii (strain DSM 15139 / CIP 105565 / TT01) (Photorhabdus luminescens subsp. laumondii).